A 993-amino-acid chain; its full sequence is General transcription factor II-I repeat domain-containing protein 1 (993 aa).

GTF2I-like repeat units follow at residues 117–211 (LGPT…EPKS) and 332–426 (LRET…DGTT). Residues 461–480 (GSRSEKSSISDECEPGTSSE) form a disordered region. GTF2I-like repeat units follow at residues 597–691 (DGIG…LEDC), 727–821 (LSRI…RPDD), and 824–918 (ANRL…ICSE). The segment at 916–961 (CSEPPKIKNGNTGPKRKRKRVSEGNSISSASSNCSSSSSSSSNMDP) is disordered. The short motif at 929-936 (PKRKRKRV) is the Nuclear localization signal element. The span at 938–961 (EGNSISSASSNCSSSSSSSSNMDP) shows a compositional bias: low complexity.

The protein belongs to the TFII-I family. As to quaternary structure, interacts (via repeats 4-5) with foxh1/fast1 (via Fork-head domain). Interacts with smad2 and smad3 (via MH1 domain) in a ligand (activin)-dependent manner. Interacts with pou5f1.1/oct-25 to form a repression complex on the promoters of the gsc and mix2 genes. In terms of tissue distribution, uniformly expressed in the embryo in pre- and early gastrula stages. Enriched in the head region of early neurula through tailbud stages.

It localises to the nucleus. Its function is as follows. Transcription factor that activates a subset of organizer-specific genes. Binds to the distal element (DE) of the gsc promoter to regulate its expression. In the presence of pou5f1.1/oct-25, forms a repression complex on the promoter of the gsc and mix2 genes to inhibit their transcription. The sequence is that of General transcription factor II-I repeat domain-containing protein 1 (gtf2ird1) from Xenopus laevis (African clawed frog).